Reading from the N-terminus, the 224-residue chain is Orotate phosphoribosyltransferase (224 aa).

5-phospho-alpha-D-ribose 1-diphosphate is bound at residue Lys29. Residue 37–38 participates in orotate binding; the sequence is FF. 5-phospho-alpha-D-ribose 1-diphosphate contacts are provided by residues 75–76, Arg105, Lys106, Lys109, His111, and 130–138; these read YK and DDVITAGTS. Orotate is bound by residues Thr134 and Arg162.

The protein belongs to the purine/pyrimidine phosphoribosyltransferase family. PyrE subfamily. As to quaternary structure, homodimer. Mg(2+) is required as a cofactor.

It carries out the reaction orotidine 5'-phosphate + diphosphate = orotate + 5-phospho-alpha-D-ribose 1-diphosphate. The protein operates within pyrimidine metabolism; UMP biosynthesis via de novo pathway; UMP from orotate: step 1/2. Its function is as follows. Catalyzes the transfer of a ribosyl phosphate group from 5-phosphoribose 1-diphosphate to orotate, leading to the formation of orotidine monophosphate (OMP). The polypeptide is Orotate phosphoribosyltransferase (Bordetella pertussis (strain Tohama I / ATCC BAA-589 / NCTC 13251)).